The chain runs to 124 residues: Iron-sulfur cluster insertion protein ErpA (124 aa).

Iron-sulfur cluster-binding residues include Cys52, Cys116, and Cys118.

The protein belongs to the HesB/IscA family. Homodimer. The cofactor is iron-sulfur cluster.

Required for insertion of 4Fe-4S clusters for at least IspG. This is Iron-sulfur cluster insertion protein ErpA from Acidithiobacillus ferrooxidans (strain ATCC 23270 / DSM 14882 / CIP 104768 / NCIMB 8455) (Ferrobacillus ferrooxidans (strain ATCC 23270)).